Reading from the N-terminus, the 168-residue chain is Acetone carboxylase gamma subunit (168 aa).

As to quaternary structure, heterohexamer of two alpha, two beta and two gamma subunits. Fe cation serves as cofactor. It depends on Mg(2+) as a cofactor. The cofactor is Zn(2+).

The catalysed reaction is acetone + hydrogencarbonate + 2 ATP + 3 H2O = acetoacetate + 2 AMP + 4 phosphate + 4 H(+). Functionally, catalyzes the carboxylation of acetone to form acetoacetate. Has a reduced activity on butanone, and no activity on 2-pentatone, 3-pentatone, 2-hexanone, chloroacetone, pyruvate, phosphoenolpyruvate, acetaldehyde, propionaldehyde and propylene oxide. The protein is Acetone carboxylase gamma subunit of Xanthobacter autotrophicus (strain ATCC BAA-1158 / Py2).